Reading from the N-terminus, the 117-residue chain is Large ribosomal subunit protein uL24 (117 aa).

A compositionally biased stretch (basic residues) spans 1–10; sequence MSKQPRKQRK. The segment at 1 to 28 is disordered; that stretch reads MSKQPRKQRKALYTAPLHKRHNSMSVHL.

This sequence belongs to the universal ribosomal protein uL24 family. As to quaternary structure, part of the 50S ribosomal subunit.

Its function is as follows. One of two assembly initiator proteins, it binds directly to the 5'-end of the 23S rRNA, where it nucleates assembly of the 50S subunit. Located at the polypeptide exit tunnel on the outside of the subunit. This chain is Large ribosomal subunit protein uL24, found in Methanosphaera stadtmanae (strain ATCC 43021 / DSM 3091 / JCM 11832 / MCB-3).